The sequence spans 178 residues: ATP synthase subunit delta (178 aa).

Belongs to the ATPase delta chain family. F-type ATPases have 2 components, F(1) - the catalytic core - and F(0) - the membrane proton channel. F(1) has five subunits: alpha(3), beta(3), gamma(1), delta(1), epsilon(1). F(0) has three main subunits: a(1), b(2) and c(10-14). The alpha and beta chains form an alternating ring which encloses part of the gamma chain. F(1) is attached to F(0) by a central stalk formed by the gamma and epsilon chains, while a peripheral stalk is formed by the delta and b chains.

It localises to the cell inner membrane. Functionally, f(1)F(0) ATP synthase produces ATP from ADP in the presence of a proton or sodium gradient. F-type ATPases consist of two structural domains, F(1) containing the extramembraneous catalytic core and F(0) containing the membrane proton channel, linked together by a central stalk and a peripheral stalk. During catalysis, ATP synthesis in the catalytic domain of F(1) is coupled via a rotary mechanism of the central stalk subunits to proton translocation. In terms of biological role, this protein is part of the stalk that links CF(0) to CF(1). It either transmits conformational changes from CF(0) to CF(1) or is implicated in proton conduction. This is ATP synthase subunit delta from Pseudomonas putida (strain W619).